A 348-amino-acid polypeptide reads, in one-letter code: Terpene cyclase ctvD (348 aa).

A helical membrane pass occupies residues 2–22 (ALSAYFLLCLSVLGLDAIYGF). N-linked (GlcNAc...) asparagine glycosylation occurs at Asn-51. 7 helical membrane-spanning segments follow: residues 77–97 (PGLS…WVAI), 116–136 (LFAM…WCAI), 161–181 (LIPI…LLPE), 191–211 (QIAI…HWGL), 235–255 (FAFV…LTLI), 283–303 (GLWF…LWAM), and 323–343 (LKVG…WLLW).

It belongs to the membrane-bound ascI terpene cyclase family.

The protein localises to the membrane. It participates in mycotoxin biosynthesis. Hydrolase; part of the gene cluster that mediates the biosynthesis of citreoviridin, an inhibitor of the of F1-ATPase beta-subunit. The HR-PKS ctvA accepts acetyl-CoA as the starter unit and catalyzes eight iterations of malonyl-CoA extension and four iterations of SAM-dependent methylation at C4, C12, C14, and C16. The KR and DH domains selectively act on the first six iterations to generate the hexaene chain. In the last three iterations, the KR and DH domains terminate their functions to yield a beta,delta-diketo ester moiety, which then undergoes intramolecular cyclization to yield an alpha-pyrone intermediate. Subsequently, ctvB methylates the alpha-pyrone hydroxyl group to generate citreomontanin. In order to form the tetrahydrofuran ring with the correct stereochemistry, the terminal alkenes of citreomontanin need to undergo isomerization to yield a (17Z)-hexaene, a step that could be catalyzed by ctvC. The (17Z)-hexaene then undergoes bisepoxidation by ctvC to form a (17R,16R,15S,14R)-bisepoxide moiety. Lastly, ctvD acts as a regioselective hydrolase to form the tetrahydrofuran ring with the substituents in the correct absolute configuration, completing the biosynthesis of citreoviridin. The sequence is that of Terpene cyclase ctvD from Aspergillus terreus (strain NIH 2624 / FGSC A1156).